Reading from the N-terminus, the 497-residue chain is Validamine 7-phosphate valienyltransferase (497 aa).

D158 serves as a coordination point for GDP-valienol. H182 is a binding site for validamine 7-phosphate. GDP-valienol-binding positions include R290, K295, R321, 325–326 (NR), 361–362 (ND), and T366. 383–386 (DGQN) serves as a coordination point for validamine 7-phosphate. GDP-valienol is bound by residues 387–388 (LS) and E391.

This sequence belongs to the glycosyltransferase 20 family. Homodimer.

The enzyme catalyses validamine 7-phosphate + GDP-valienol = validoxylamine A 7'-phosphate + GDP + H(+). Involved in the biosynthesis of the antifungal agent validamycin A. Catalyzes the condensation between GDP-valienol and validamine 7-phosphate via a nonglycosidic C-N bond formation to yield validoxylamine A 7'-phosphate. This is Validamine 7-phosphate valienyltransferase from Streptomyces hygroscopicus subsp. limoneus.